Here is a 158-residue protein sequence, read N- to C-terminus: NAD(P)H-quinone oxidoreductase subunit J, chloroplastic (158 aa).

This sequence belongs to the complex I 30 kDa subunit family. NDH is composed of at least 16 different subunits, 5 of which are encoded in the nucleus.

Its subcellular location is the plastid. It is found in the chloroplast thylakoid membrane. The catalysed reaction is a plastoquinone + NADH + (n+1) H(+)(in) = a plastoquinol + NAD(+) + n H(+)(out). It carries out the reaction a plastoquinone + NADPH + (n+1) H(+)(in) = a plastoquinol + NADP(+) + n H(+)(out). In terms of biological role, NDH shuttles electrons from NAD(P)H:plastoquinone, via FMN and iron-sulfur (Fe-S) centers, to quinones in the photosynthetic chain and possibly in a chloroplast respiratory chain. The immediate electron acceptor for the enzyme in this species is believed to be plastoquinone. Couples the redox reaction to proton translocation, and thus conserves the redox energy in a proton gradient. This chain is NAD(P)H-quinone oxidoreductase subunit J, chloroplastic, found in Citrus sinensis (Sweet orange).